The chain runs to 118 residues: Large ribosomal subunit protein bL20 (118 aa).

This sequence belongs to the bacterial ribosomal protein bL20 family.

Its function is as follows. Binds directly to 23S ribosomal RNA and is necessary for the in vitro assembly process of the 50S ribosomal subunit. It is not involved in the protein synthesizing functions of that subunit. In Francisella philomiragia subsp. philomiragia (strain ATCC 25017 / CCUG 19701 / FSC 153 / O#319-036), this protein is Large ribosomal subunit protein bL20.